The sequence spans 338 residues: 4-hydroxythreonine-4-phosphate dehydrogenase (338 aa).

Substrate contacts are provided by histidine 139 and threonine 140. Residues histidine 169, histidine 214, and histidine 270 each coordinate a divalent metal cation. Residues lysine 278, asparagine 287, and arginine 296 each contribute to the substrate site.

It belongs to the PdxA family. As to quaternary structure, homodimer. The cofactor is Zn(2+). Mg(2+) serves as cofactor. Requires Co(2+) as cofactor.

The protein localises to the cytoplasm. The catalysed reaction is 4-(phosphooxy)-L-threonine + NAD(+) = 3-amino-2-oxopropyl phosphate + CO2 + NADH. The protein operates within cofactor biosynthesis; pyridoxine 5'-phosphate biosynthesis; pyridoxine 5'-phosphate from D-erythrose 4-phosphate: step 4/5. Functionally, catalyzes the NAD(P)-dependent oxidation of 4-(phosphooxy)-L-threonine (HTP) into 2-amino-3-oxo-4-(phosphooxy)butyric acid which spontaneously decarboxylates to form 3-amino-2-oxopropyl phosphate (AHAP). The sequence is that of 4-hydroxythreonine-4-phosphate dehydrogenase from Desulfosudis oleivorans (strain DSM 6200 / JCM 39069 / Hxd3) (Desulfococcus oleovorans).